Consider the following 545-residue polypeptide: MAKRIIYNEQARRALERGIDILAESVAVTLGPKGRNVVLEKKFGAPQIINDGVTIAKEIELEDHIENTGVALIRQAASKTNDAAGDGTTTATVLAHAMVKAGLRNVAAGANAITLKKGIDKATEFLVGKIQENSKPISDSNAIAQCGTIAAGNDDEVGQMIANAMDKVGKEGVISLEEGKSMTTELEVTEGMRFDKGYISPYFATDTERMEAVLDEPYILLTDKKIALVQDLVPVLEQIAKTGKPLVIIAEDIEKEALATLVVNRLRGVLNVAAVKAPGFGDRRKAMLEDMAVLTNGQLITEDAGLKLENATLDMLGTGRRITINKETTTIVAEGNEQAVKARCDQIKKQMDETDSSYDKEKLQERLAKLAGGVAVIKVGAATETEMKDKKLRLEDAINATKAAVEEGIVPGGGTTLAHLSPILKEWADKNLEGEELIGANIVEASLTAPLMRIAENAGSNGAVIAENVKSKPFNDGFNAATGEYVDMSSAGIVDPAKVTRSGLQNAASIAGMVLTTECIVADLPEKKDAATPGGAPGMGGDFDY.

Residues 29–32 (TLGP), 86–90 (DGTTT), G413, 479–481 (NAA), and D495 contribute to the ATP site.

The protein belongs to the chaperonin (HSP60) family. In terms of assembly, forms a cylinder of 14 subunits composed of two heptameric rings stacked back-to-back. Interacts with the co-chaperonin GroES.

The protein resides in the cytoplasm. The enzyme catalyses ATP + H2O + a folded polypeptide = ADP + phosphate + an unfolded polypeptide.. Its function is as follows. Together with its co-chaperonin GroES, plays an essential role in assisting protein folding. The GroEL-GroES system forms a nano-cage that allows encapsulation of the non-native substrate proteins and provides a physical environment optimized to promote and accelerate protein folding. This Prochlorococcus marinus (strain MIT 9312) protein is Chaperonin GroEL 2.